We begin with the raw amino-acid sequence, 104 residues long: Large ribosomal subunit protein bL21 (104 aa).

This sequence belongs to the bacterial ribosomal protein bL21 family. Part of the 50S ribosomal subunit. Contacts protein L20.

Its function is as follows. This protein binds to 23S rRNA in the presence of protein L20. This is Large ribosomal subunit protein bL21 from Francisella tularensis subsp. holarctica (strain FTNF002-00 / FTA).